The primary structure comprises 1073 residues: Carbamoyl phosphate synthase large chain (1073 aa).

The interval proline 2–glutamate 403 is carboxyphosphate synthetic domain. ATP is bound by residues arginine 129, arginine 169, glycine 175, glycine 176, glutamate 208, leucine 210, glutamate 215, glycine 241, valine 242, histidine 243, glutamine 285, and glutamate 299. Residues aspartate 133 to valine 328 form the ATP-grasp 1 domain. 3 residues coordinate Mg(2+): glutamine 285, glutamate 299, and asparagine 301. Mn(2+) contacts are provided by glutamine 285, glutamate 299, and asparagine 301. Residues valine 404–alanine 553 are oligomerization domain. Positions asparagine 554–serine 935 are carbamoyl phosphate synthetic domain. In terms of domain architecture, ATP-grasp 2 spans glutamine 678–alanine 869. Positions 714, 753, 755, 760, 785, 786, 787, 788, 828, and 840 each coordinate ATP. 3 residues coordinate Mg(2+): glutamine 828, glutamate 840, and asparagine 842. Residues glutamine 828, glutamate 840, and asparagine 842 each contribute to the Mn(2+) site. Positions glutamate 936 to alanine 1073 constitute an MGS-like domain. Positions glutamate 936 to alanine 1073 are allosteric domain.

This sequence belongs to the CarB family. In terms of assembly, composed of two chains; the small (or glutamine) chain promotes the hydrolysis of glutamine to ammonia, which is used by the large (or ammonia) chain to synthesize carbamoyl phosphate. Tetramer of heterodimers (alpha,beta)4. Mg(2+) is required as a cofactor. It depends on Mn(2+) as a cofactor.

It carries out the reaction hydrogencarbonate + L-glutamine + 2 ATP + H2O = carbamoyl phosphate + L-glutamate + 2 ADP + phosphate + 2 H(+). The enzyme catalyses hydrogencarbonate + NH4(+) + 2 ATP = carbamoyl phosphate + 2 ADP + phosphate + 2 H(+). The protein operates within amino-acid biosynthesis; L-arginine biosynthesis; carbamoyl phosphate from bicarbonate: step 1/1. It participates in pyrimidine metabolism; UMP biosynthesis via de novo pathway; (S)-dihydroorotate from bicarbonate: step 1/3. Large subunit of the glutamine-dependent carbamoyl phosphate synthetase (CPSase). CPSase catalyzes the formation of carbamoyl phosphate from the ammonia moiety of glutamine, carbonate, and phosphate donated by ATP, constituting the first step of 2 biosynthetic pathways, one leading to arginine and/or urea and the other to pyrimidine nucleotides. The large subunit (synthetase) binds the substrates ammonia (free or transferred from glutamine from the small subunit), hydrogencarbonate and ATP and carries out an ATP-coupled ligase reaction, activating hydrogencarbonate by forming carboxy phosphate which reacts with ammonia to form carbamoyl phosphate. The chain is Carbamoyl phosphate synthase large chain from Pseudomonas aeruginosa (strain ATCC 15692 / DSM 22644 / CIP 104116 / JCM 14847 / LMG 12228 / 1C / PRS 101 / PAO1).